Here is a 126-residue protein sequence, read N- to C-terminus: DNA-directed RNA polymerase subunit omega (126 aa).

This sequence belongs to the RNA polymerase subunit omega family. As to quaternary structure, the RNAP catalytic core consists of 2 alpha, 1 beta, 1 beta' and 1 omega subunit. When a sigma factor is associated with the core the holoenzyme is formed, which can initiate transcription.

The catalysed reaction is RNA(n) + a ribonucleoside 5'-triphosphate = RNA(n+1) + diphosphate. Functionally, promotes RNA polymerase assembly. Latches the N- and C-terminal regions of the beta' subunit thereby facilitating its interaction with the beta and alpha subunits. The polypeptide is DNA-directed RNA polymerase subunit omega (Rickettsia bellii (strain OSU 85-389)).